A 297-amino-acid polypeptide reads, in one-letter code: UDP-N-acetylglucosamine transporter TMEM241 (297 aa).

10 helical membrane-spanning segments follow: residues 7 to 29 (LLGL…VLSV), 32 to 52 (FTYP…LLHM), 69 to 89 (VLIW…GSKA), 93 to 113 (LAVP…CGYQ), 121 to 141 (TSLS…CLPF), 146 to 166 (FDPD…SYKI), 187 to 207 (IFSM…FGAL), 211 to 231 (FLYF…GFFL), 250 to 270 (WILC…DMAL), and 271 to 291 (TKAT…LVFS).

It belongs to the nucleotide-sugar transporter family. SLC35A subfamily. As to expression, widely expressed with high expression in lung.

The protein resides in the golgi apparatus. The protein localises to the cis-Golgi network membrane. Functionally, golgi-localized UDP-N-acetylglucosamine (UDP-GlcNAc) transporter that transports UDP-N-acetylglucosamine into Golgi lumen. Contributes to lysosomal targeting of NPC2, a key protein required for lysosomal cholesterol exiting, and that utilizes the mannose-6-phosphate (M6P) modification pathway for its lysosomal targeting. This Mus musculus (Mouse) protein is UDP-N-acetylglucosamine transporter TMEM241 (Tmem241).